A 357-amino-acid chain; its full sequence is Protein MGF 360-14L (357 aa).

Belongs to the asfivirus MGF 360 family. In terms of assembly, interacts with host IRF3 and TRIM21; these interactions mediates degradation of IRF3 through TRIM21 and ubiquitin-meditated proteolysis.

It is found in the host cytoplasm. Plays a role in virus cell tropism, and may be required for efficient virus replication in macrophages. Also inhibits the host cGAS/STING-mediated type I interferon production by inducing host IRF3 degradation through the proteasome pathway. This chain is Protein MGF 360-14L, found in Ornithodoros (relapsing fever ticks).